The primary structure comprises 258 residues: Arylamine N-acetyltransferase 1 (258 aa).

The active-site Acyl-thioester intermediate is Cys-59. Ile-97–His-98 lines the substrate pocket. Catalysis depends on residues His-98 and Asp-113. Residues Tyr-199 and Thr-205 each coordinate CoA.

Belongs to the arylamine N-acetyltransferase family.

The protein resides in the cytoplasm. The enzyme catalyses an arylamine + acetyl-CoA = an N-acetylarylamine + CoA. Participates in the detoxification of a plethora of hydrazine and arylamine drugs. This Felis catus (Cat) protein is Arylamine N-acetyltransferase 1 (NAT1).